The following is a 52-amino-acid chain: Phospholamban (52 aa).

N-acetylmethionine is present on Met1. Topologically, residues 1-31 (MDKVQYLTRSAIRRASTIEMPQQARQNLQNL) are cytoplasmic. The residue at position 16 (Ser16) is a Phosphoserine; by PKA and DMPK. Thr17 carries the post-translational modification Phosphothreonine; by CaMK2. A helical transmembrane segment spans residues 32-52 (FINFCLILICLLLICIIVMLL). The S-palmitoyl cysteine moiety is linked to residue Cys36.

This sequence belongs to the phospholamban family. In terms of assembly, homopentamer. Can also form heterooligomers with other sarcoplasmic/endoplasmic reticulum calcium ATPase (SERCA) regulators ARLN, ERLN, SLN and STRIT1/DWORF. Monomer. Interacts with HAX1. Interacts as a monomer with ATP2A2; the interaction decreases ATP2A2 Ca(2+) affinity. Interacts with VMP1; VMP1 competes with PLN and SLN to prevent them from forming an inhibitory complex with ATP2A2. Interacts with S100A1 in a Ca(2+)-dependent manner. Post-translationally, phosphorylation by DMPK may stimulate sarcoplasmic reticulum calcium uptake in cardiomyocytes. Phosphorylation by PKA abolishes the inhibition of ATP2A2-mediated calcium uptake. Phosphorylated at Thr-17 by CaMK2, and in response to beta-adrenergic stimulation. Palmitoylated by ZDHHC16, promoting formation of the homopentamer. In terms of processing, in elongated spermatids, proteolytically cleaved by SPPL2C which modulates intracellular Ca(2+) homeostasis. In terms of tissue distribution, heart.

The protein localises to the endoplasmic reticulum membrane. Its subcellular location is the sarcoplasmic reticulum membrane. It is found in the mitochondrion membrane. The protein resides in the membrane. Reversibly inhibits the activity of ATP2A2/SERCA2 in cardiac sarcoplasmic reticulum by decreasing the apparent affinity of the ATPase for Ca(2+). Binds preferentially to the ATP-bound E1 conformational form of ATP2A2 which predominates at low Ca(2+) concentrations during the diastolic phase of the cardiac cycle. Inhibits ATP2A2 Ca(2+) affinity by disrupting its allosteric activation by ATP. Modulates the contractility of the heart muscle in response to physiological stimuli via its effects on ATP2A2. Modulates calcium re-uptake during muscle relaxation and plays an important role in calcium homeostasis in the heart muscle. The degree of ATP2A2 inhibition depends on the oligomeric state of PLN. ATP2A2 inhibition is alleviated by PLN phosphorylation. Also inhibits the activity of ATP2A3/SERCA3. Controls intracellular Ca(2+) levels in elongated spermatids and may play a role in germ cell differentiation. In the thalamic reticular nucleus of the brain, plays a role in the regulation of sleep patterns and executive functioning. The polypeptide is Phospholamban (Canis lupus familiaris (Dog)).